Reading from the N-terminus, the 259-residue chain is Global transcriptional regulator CodY (259 aa).

The GAF domain stretch occupies residues 1–155 (MTLLEKTRKI…GGTVVGMEIL (155 aa)). Residues 203-222 (ASKIADRVGITRSVIVNALR) constitute a DNA-binding region (H-T-H motif).

This sequence belongs to the CodY family.

It localises to the cytoplasm. DNA-binding global transcriptional regulator which is involved in the adaptive response to starvation and acts by directly or indirectly controlling the expression of numerous genes in response to nutrient availability. During rapid exponential growth, CodY is highly active and represses genes whose products allow adaptation to nutrient depletion. The polypeptide is Global transcriptional regulator CodY (Listeria welshimeri serovar 6b (strain ATCC 35897 / DSM 20650 / CCUG 15529 / CIP 8149 / NCTC 11857 / SLCC 5334 / V8)).